The sequence spans 660 residues: Genome-linked protein precursor (660 aa).

An N-terminal signal peptide occupies residues Met1 to Ala25. 2 consecutive transmembrane segments (helical) span residues Ala131 to Tyr151 and Ala165 to Ile185. A Peptidase S39 domain is found at Val224–Glu416. Active-site for protease activity residues include His272, Asp304, and Ser373. 2 disordered regions span residues Glu463–Pro490 and Thr595–Arg660.

This sequence belongs to the peptidase S39B family.

Its subcellular location is the host membrane. Its function is as follows. Precursor from which the VPg molecule is probably released at the onset of the RNA synthesis. Essential for virus replication. This Euphorbia pulcherrima (Poinsettia) protein is Genome-linked protein precursor.